The sequence spans 204 residues: Recombination protein RecR (204 aa).

The C4-type zinc finger occupies 58-75; that stretch reads CSICQNVTDRGDDPCSIC. In terms of domain architecture, Toprim spans 83–181; the sequence is SKICVVESPP…EVTKIARGIP (99 aa).

This sequence belongs to the RecR family.

Functionally, may play a role in DNA repair. It seems to be involved in an RecBC-independent recombinational process of DNA repair. It may act with RecF and RecO. The sequence is that of Recombination protein RecR from Chlorobium phaeobacteroides (strain BS1).